The following is a 248-amino-acid chain: ATP synthase subunit a, chloroplastic (248 aa).

The next 5 helical transmembrane spans lie at 35 to 55, 94 to 114, 133 to 153, 202 to 222, and 224 to 244; these read GQVF…SFLG, VPYI…GALI, INTT…AGLS, VFTL…GLFA, and SIQA…AMEG.

The protein belongs to the ATPase A chain family. As to quaternary structure, F-type ATPases have 2 components, CF(1) - the catalytic core - and CF(0) - the membrane proton channel. CF(1) has five subunits: alpha(3), beta(3), gamma(1), delta(1), epsilon(1). CF(0) has four main subunits: a, b, b' and c.

The protein resides in the plastid. It localises to the chloroplast thylakoid membrane. Functionally, key component of the proton channel; it plays a direct role in the translocation of protons across the membrane. In Porphyra purpurea (Red seaweed), this protein is ATP synthase subunit a, chloroplastic.